The sequence spans 271 residues: Formamidopyrimidine-DNA glycosylase (271 aa).

Residue Pro2 is the Schiff-base intermediate with DNA of the active site. Glu3 functions as the Proton donor in the catalytic mechanism. Lys57 serves as the catalytic Proton donor; for beta-elimination activity. Positions 90, 109, and 151 each coordinate DNA. An FPG-type zinc finger spans residues 236 to 270 (HVYGRGGETCTSCGNLLSEIRLGQRTTVFCGICQT). Arg260 acts as the Proton donor; for delta-elimination activity in catalysis.

It belongs to the FPG family. As to quaternary structure, monomer. Requires Zn(2+) as cofactor.

It catalyses the reaction Hydrolysis of DNA containing ring-opened 7-methylguanine residues, releasing 2,6-diamino-4-hydroxy-5-(N-methyl)formamidopyrimidine.. The enzyme catalyses 2'-deoxyribonucleotide-(2'-deoxyribose 5'-phosphate)-2'-deoxyribonucleotide-DNA = a 3'-end 2'-deoxyribonucleotide-(2,3-dehydro-2,3-deoxyribose 5'-phosphate)-DNA + a 5'-end 5'-phospho-2'-deoxyribonucleoside-DNA + H(+). In terms of biological role, involved in base excision repair of DNA damaged by oxidation or by mutagenic agents. Acts as a DNA glycosylase that recognizes and removes damaged bases. Has a preference for oxidized purines, such as 7,8-dihydro-8-oxoguanine (8-oxoG). Has AP (apurinic/apyrimidinic) lyase activity and introduces nicks in the DNA strand. Cleaves the DNA backbone by beta-delta elimination to generate a single-strand break at the site of the removed base with both 3'- and 5'-phosphates. This chain is Formamidopyrimidine-DNA glycosylase, found in Shewanella sp. (strain W3-18-1).